A 495-amino-acid chain; its full sequence is Major facilitator-type transporter hxnP (495 aa).

Residues 1–24 (MGATATDIEKVPSAGTPDEPKAGE) are disordered. Transmembrane regions (helical) follow at residues 36-55 (SFVRKVDFFVLPMLCLMYFF), 84-104 (LLILLFYIPFGLFDLPWNLLI), 123-143 (VWGICALCQCAANNFGGLLAI), 145-165 (IILGVFEAGFFAGSTFYFTLF), and 177-197 (VLQSFAVLASAFSGLISFGLF). A glycan (N-linked (GlcNAc...) asparagine) is linked at asparagine 200. 5 helical membrane-spanning segments follow: residues 209–229 (WLFIVEGAMTLIIGVIGFWWL), 282–302 (VITFSYPVAYATAMNFFPIIV), 314–334 (LWTVAPNLVGAVVLLVVAKSS), 341–361 (SLHIIFSLTVSLVGMLILASI), and 368–388 (GVSYFACFLLASGAYIPTCLV). Asparagine 395 carries N-linked (GlcNAc...) asparagine glycosylation. Transmembrane regions (helical) follow at residues 404-424 (ANTGFFVGLGNIAGVLSAATF) and 436-456 (LVATCACNGVCILATAFMGTW).

The protein belongs to the major facilitator superfamily.

Its subcellular location is the cell membrane. In terms of biological role, major facilitator-type transporter, part of the hnx cluster involved in the purine degradation. The nicotinate hydroxylase hnxS accepts nicotinate as a substrate and catalyzes the first step of nicotinate catabolism. The major facilitator-type transporters hxnP and hxnZ are probably involved in the uptake of nicotinate-derived metabolites, and the oxidoreductases hxnT and hxnY in the further metabolism of 6-OH nicotinic acid. The polypeptide is Major facilitator-type transporter hxnP (Emericella nidulans (strain FGSC A4 / ATCC 38163 / CBS 112.46 / NRRL 194 / M139) (Aspergillus nidulans)).